Consider the following 210-residue polypeptide: Somatotropin-1 (210 aa).

The N-terminal stretch at 1-22 (MARALVLLSVVLVSLLVNQGRA) is a signal peptide. His38 is a binding site for Zn(2+). Cysteines 71 and 183 form a disulfide. Glu192 contributes to the Zn(2+) binding site. Cys200 and Cys208 are disulfide-bonded.

Belongs to the somatotropin/prolactin family.

Its subcellular location is the secreted. Its function is as follows. Growth hormone plays an important role in growth control and is involved in the regulation of several anabolic processes. Implicated as an osmoregulatory substance important for seawater adaptation. This chain is Somatotropin-1 (gh1), found in Carassius auratus (Goldfish).